The primary structure comprises 562 residues: Serine/threonine-protein kinase dst3 (562 aa).

Residues 23–285 form the Protein kinase domain; the sequence is FQIVEVVGSG…AQQLLSHPFI (263 aa). Residues 29–37 and lysine 59 contribute to the ATP site; that span reads VGSGSFGTV. Aspartate 154 functions as the Proton acceptor in the catalytic mechanism. Disordered regions lie at residues 316–339 and 366–562; these read LEEQ…TRAS and SIMR…NVNI. The span at 322-339 shows a compositional bias: polar residues; it reads QRNSSGSKMVSSVPTRAS. Composition is skewed to low complexity over residues 421–431, 442–454, and 476–494; these read NNNNNNNNTTT, QQQQ…NNNK, and TTPT…TTKT. Polar residues predominate over residues 495–522; that stretch reads GSSLNIKPTNNVNRSTISIGQQKSPLQS. A compositionally biased stretch (acidic residues) spans 542–562; that stretch reads EDEEDEEEFNHEDYEEINVNI.

The protein belongs to the protein kinase superfamily. STE Ser/Thr protein kinase family. STE20 subfamily. It depends on Mg(2+) as a cofactor.

It catalyses the reaction L-seryl-[protein] + ATP = O-phospho-L-seryl-[protein] + ADP + H(+). The enzyme catalyses L-threonyl-[protein] + ATP = O-phospho-L-threonyl-[protein] + ADP + H(+). This is Serine/threonine-protein kinase dst3 from Dictyostelium discoideum (Social amoeba).